Reading from the N-terminus, the 199-residue chain is Pyridoxal 5'-phosphate synthase subunit PdxT (199 aa).

An L-glutamine-binding site is contributed by 49-51 (GES). The active-site Nucleophile is the Cys-81. L-glutamine is bound by residues Arg-110 and 139-140 (IR). Active-site charge relay system residues include His-175 and Glu-177.

Belongs to the glutaminase PdxT/SNO family. In the presence of PdxS, forms a dodecamer of heterodimers. Only shows activity in the heterodimer.

The catalysed reaction is aldehydo-D-ribose 5-phosphate + D-glyceraldehyde 3-phosphate + L-glutamine = pyridoxal 5'-phosphate + L-glutamate + phosphate + 3 H2O + H(+). The enzyme catalyses L-glutamine + H2O = L-glutamate + NH4(+). Its pathway is cofactor biosynthesis; pyridoxal 5'-phosphate biosynthesis. Its function is as follows. Catalyzes the hydrolysis of glutamine to glutamate and ammonia as part of the biosynthesis of pyridoxal 5'-phosphate. The resulting ammonia molecule is channeled to the active site of PdxS. The chain is Pyridoxal 5'-phosphate synthase subunit PdxT from Frankia casuarinae (strain DSM 45818 / CECT 9043 / HFP020203 / CcI3).